A 181-amino-acid polypeptide reads, in one-letter code: Salmonella anti-inflammatory response activator (181 aa).

Residues 4–24 (FVYIYILVIYGSYLWFSLGGN) traverse the membrane as a helical segment.

Interacts with host (human) STAT3.

It localises to the membrane. The protein localises to the host cytoplasm. Functionally, a Salmonella strain-specific effector that induces a host STAT3-dependent anti-inflammatory pathway. In bacteria-infected host cells (human) leads to phosphorylation of host STAT3, at least on 'Tyr-705' and interleukin-10 (IL-10, IL10) production; expressing the gene alone in host cells induces STAT3 phosphorylation and IL-10 production. IL-10 production requires STAT3 in infected cells. Contributes to virulence in mouse infection models. Encoded in only a few S.typhimurium serovars, it may be a specific effector for adaptation to bovine hosts. The polypeptide is Salmonella anti-inflammatory response activator (Salmonella typhimurium (strain 14028s / SGSC 2262)).